Reading from the N-terminus, the 188-residue chain is dCTP deaminase (188 aa).

DCTP contacts are provided by residues 111–116 (KSTYAR), 135–137 (TLE), Gln156, Tyr170, and Gln180. Glu137 acts as the Proton donor/acceptor in catalysis.

This sequence belongs to the dCTP deaminase family. In terms of assembly, homotrimer.

The catalysed reaction is dCTP + H2O + H(+) = dUTP + NH4(+). It functions in the pathway pyrimidine metabolism; dUMP biosynthesis; dUMP from dCTP (dUTP route): step 1/2. In terms of biological role, catalyzes the deamination of dCTP to dUTP. The chain is dCTP deaminase from Paracidovorax citrulli (strain AAC00-1) (Acidovorax citrulli).